Reading from the N-terminus, the 542-residue chain is uncharacterized protein (542 aa).

The next 5 helical transmembrane spans lie at 4–23 (ILRDNPLLLLFIVAGIGYPL), 28–47 (IGGIHLGVAAVLFVGLAFGA), 57–79 (IVYQFGLALFVYCVGLSSGHGFL), 86–108 (GVIYNLLTLGVILLAAALLLIPH), and 151–173 (PVVGYSIAYPASVLGVILAIYLA). RCK C-terminal domains lie at 186–270 (RTLK…VIGC) and 273–356 (EVQA…LGDS). The next 6 helical transmembrane spans lie at 365 to 384 (IAVLGLGMALGIGLGLVPIP), 389 to 408 (ITVRLGLAGGPLIVALFLGA), 415 to 437 (LVWVLPYSANMLLRQMGLTIFLA), 457 to 479 (WAILGASAAIIVLLSWVMLYVGY), 484 to 506 (IPMGLLTGMVAGMQTQSATLGFA), and 519 to 541 (YAMVYPMAMVVKIVLAPVIIAVL).

Belongs to the AAE transporter (TC 2.A.81) family.

The protein localises to the cell membrane. This is an uncharacterized protein from Symbiobacterium thermophilum (strain DSM 24528 / JCM 14929 / IAM 14863 / T).